Consider the following 491-residue polypeptide: Probable aspartyl aminopeptidase (491 aa).

H90 is a Zn(2+) binding site. H168 contacts substrate. D278 serves as a coordination point for Zn(2+). E315 is a substrate binding site. The Zn(2+) site is built by E316 and D361. Substrate-binding residues include D361, H364, K389, and Y396. Residue H455 coordinates Zn(2+).

The protein belongs to the peptidase M18 family. In terms of assembly, tetrahedron-shaped homododecamer built from six homodimers. Zn(2+) serves as cofactor.

The protein localises to the cytoplasm. It carries out the reaction Release of an N-terminal aspartate or glutamate from a peptide, with a preference for aspartate.. Its function is as follows. Likely to play an important role in intracellular protein and peptide metabolism. In Ricinus communis (Castor bean), this protein is Probable aspartyl aminopeptidase.